We begin with the raw amino-acid sequence, 209 residues long: MAEICKMKYTVLDSPLGKIELSGCERGLHGIRFLSGKTPNTDPTEAPACPEVLGGPEGVPEPLVQCTAWLEAYFHEPAATEGLPLPALHHPVFQQDSFTRQVLWKLLKVVKFGEMVSYQQLAALAGNPKAARAVGGAMRSNPVPILIPCHRVIRSDGAIGNYSGGGQTVKEWLLAHEGIPTGQPASKGLGLIGSWLKPSFESSSPKPSG.

Cys5 provides a ligand contact to Zn(2+). At Ser14 the chain carries Phosphoserine. The Zn(2+) site is built by Cys24, His29, and His89. DNA-binding residues include Thr99, Tyr118, Gln119, Asn127, and Arg132. Residue Cys149 is the Nucleophile; methyl group acceptor of the active site. Position 155 (Ser155) interacts with DNA.

The protein belongs to the MGMT family. It depends on Zn(2+) as a cofactor.

Its subcellular location is the nucleus. The enzyme catalyses a 6-O-methyl-2'-deoxyguanosine in DNA + L-cysteinyl-[protein] = S-methyl-L-cysteinyl-[protein] + a 2'-deoxyguanosine in DNA. It catalyses the reaction a 4-O-methyl-thymidine in DNA + L-cysteinyl-[protein] = a thymidine in DNA + S-methyl-L-cysteinyl-[protein]. Its function is as follows. Involved in the cellular defense against the biological effects of O6-methylguanine (O6-MeG) and O4-methylthymine (O4-MeT) in DNA. Repairs the methylated nucleobase in DNA by stoichiometrically transferring the methyl group to a cysteine residue in the enzyme. This is a suicide reaction: the enzyme is irreversibly inactivated. The polypeptide is Methylated-DNA--protein-cysteine methyltransferase (Mgmt) (Rattus norvegicus (Rat)).